Reading from the N-terminus, the 396-residue chain is Purine ribonucleoside efflux pump NepI (396 aa).

Residues 1-21 (MSEFIAENRGADAITRPNWSA) are Cytoplasmic-facing. Residues 22-42 (VFSVAFCVACLIIVEFLPVSL) form a helical membrane-spanning segment. At 43-54 (LTPMAQDLGISE) the chain is on the periplasmic side. A helical membrane pass occupies residues 55–75 (GVAGQSVTVTAFVAMFASLFI). Topologically, residues 76–85 (TQTIQATDRC) are cytoplasmic. The chain crosses the membrane as a helical span at residues 86–106 (YVVILFAVLLTLSCLLVSFAN). A topological domain (periplasmic) is located at residue S107. A helical transmembrane segment spans residues 108 to 128 (FSLLLIGRACLGLALGGFWAM). Residues 129-147 (SASLTMRLVPPRTVPKALS) are Cytoplasmic-facing. The helical transmembrane segment at 148 to 168 (VIFGAVSIALVIAAPLGSFLG) threads the bilayer. Topologically, residues 169–175 (ELIGWRN) are periplasmic. The helical transmembrane segment at 176-196 (VFNAAAVMGVLCIFWIIKSLP) threads the bilayer. At 197 to 215 (SLPGEPSHQKQNTFRLLQR) the chain is on the cytoplasmic side. Residues 216–236 (PGVMAGMIAIFMSFAGQFAFF) traverse the membrane as a helical segment. Residues 237–255 (TYIRPVYMNLAGFGVDGLT) are Periplasmic-facing. The helical transmembrane segment at 256-276 (LVLLSFGIASFIGTSLSSFIL) threads the bilayer. The Cytoplasmic portion of the chain corresponds to 277-281 (KRSVK). A helical transmembrane segment spans residues 282 to 302 (LALAGAPLILAVSALVLTLWG). Residues 303–305 (SDK) lie on the Periplasmic side of the membrane. Residues 306-326 (IVATGVAIIWGLTFALVPVGW) traverse the membrane as a helical segment. Residues 327–343 (STWITRSLADQAEKAGS) lie on the Cytoplasmic side of the membrane. The chain crosses the membrane as a helical span at residues 344 to 364 (IQVAVIQLANTCGAAIGGYAL). Topologically, residues 365–366 (DN) are periplasmic. A helical membrane pass occupies residues 367–387 (IGLTSPLMLSGTLMLLTALLV). Residues 388-396 (TAKVKMKKS) are Cytoplasmic-facing.

It belongs to the major facilitator superfamily. DHA1 family. NepI (TC 2.A.1.2.26) subfamily.

The protein resides in the cell inner membrane. It carries out the reaction inosine(in) + H(+)(out) = inosine(out) + H(+)(in). The catalysed reaction is guanosine(in) + H(+)(out) = guanosine(out) + H(+)(in). Functionally, involved in the efflux of purine ribonucleosides, such as inosine and guanosine. This is Purine ribonucleoside efflux pump NepI from Shigella boydii serotype 4 (strain Sb227).